A 29-amino-acid chain; its full sequence is Cyclotide mang-A (29 aa).

Positions 1–29 (GFPTCGETCTLGTCNTPGCTCSWPICTRD) form a cross-link, cyclopeptide (Gly-Asp). Intrachain disulfides connect Cys5–Cys19, Cys9–Cys21, and Cys14–Cys26.

It belongs to the cyclotide family. Moebius subfamily. This is a cyclic peptide.

Functionally, probably participates in a plant defense mechanism. The protein is Cyclotide mang-A of Melicytus angustifolius (Hymenanthera angustifolia).